Reading from the N-terminus, the 1275-residue chain is Myosin-1 (1275 aa).

Residues 35–727 (VGVSDLTLLS…TLFAMEDMRD (693 aa)) enclose the Myosin motor domain. 128 to 135 (GESGAGKT) serves as a coordination point for ATP. A Phosphoserine modification is found at Ser361. The segment at 410-493 (TIGILDIYGF…PGLFAALNDS (84 aa)) is actin-binding. IQ domains lie at 731-751 (HNMA…KEDA) and 752-777 (ARLI…YGNG). A TH1 domain is found at 785-974 (RRRMSMLGSR…KSGTVSVRPG (190 aa)). Disordered stretches follow at residues 966–1064 (SGTV…LNNN), 1089–1128 (QNHN…AKPK), 1183–1230 (SECP…GGLS), and 1251–1275 (IADA…DDDW). Positions 977–992 (PDSQNPKRPRATSSKV) are enriched in polar residues. The span at 1095–1106 (PTAPSRPAKKAA) shows a compositional bias: low complexity. Residues 1107-1121 (PAPPVKKTAPPPPPS) are compositionally biased toward pro residues. The SH3 domain occupies 1127–1187 (PKWPTFKANY…PTAYISECPP (61 aa)). Residues 1254-1263 (ALKKRSATRD) are compositionally biased toward basic and acidic residues. Positions 1264 to 1275 (SDDEEEDDDDDW) are enriched in acidic residues.

The protein belongs to the TRAFAC class myosin-kinesin ATPase superfamily. Myosin family. Phosphorylation of the TEDS site (Ser-361) is required for the polarization of the actin cytoskeleton. Phosphorylation probably activates the myosin-I ATPase activity.

The protein resides in the cytoplasm. It is found in the cytoskeleton. The protein localises to the actin patch. Type-I myosin implicated in the organization of the actin cytoskeleton. Required for proper actin cytoskeleton polarization. At the cell cortex, assembles in patch-like structures together with proteins from the actin-polymerizing machinery and promotes actin assembly. Functions as actin nucleation-promoting factor (NPF) for the Arp2/3 complex. This chain is Myosin-1 (MYO1), found in Meyerozyma guilliermondii (strain ATCC 6260 / CBS 566 / DSM 6381 / JCM 1539 / NBRC 10279 / NRRL Y-324) (Yeast).